The following is a 256-amino-acid chain: Small ribosomal subunit protein eS1A (256 aa).

At alanine 2 the chain carries N-acetylalanine; partial.

Belongs to the eukaryotic ribosomal protein eS1 family. In terms of assembly, component of the small ribosomal subunit. Mature ribosomes consist of a small (40S) and a large (60S) subunit. The 40S subunit contains about 33 different proteins and 1 molecule of RNA (18S). The 60S subunit contains about 49 different proteins and 3 molecules of RNA (25S, 5.8S and 5S).

Its subcellular location is the cytoplasm. This chain is Small ribosomal subunit protein eS1A, found in Clavispora lusitaniae (strain ATCC 42720) (Yeast).